A 298-amino-acid chain; its full sequence is Probable endonuclease 4 (298 aa).

Zn(2+) is bound by residues H69, H111, E146, D180, H183, H215, D228, H230, and E260.

The protein belongs to the AP endonuclease 2 family. Zn(2+) is required as a cofactor.

The catalysed reaction is Endonucleolytic cleavage to 5'-phosphooligonucleotide end-products.. Functionally, endonuclease IV plays a role in DNA repair. It cleaves phosphodiester bonds at apurinic or apyrimidinic (AP) sites, generating a 3'-hydroxyl group and a 5'-terminal sugar phosphate. This chain is Probable endonuclease 4, found in Bacillus cereus (strain AH820).